The following is a 139-amino-acid chain: Transcription factor E (139 aa).

One can recognise an HTH TFE/IIEalpha-type domain in the interval 7–91 (IINKKQDEVS…DYEKILDTLL (85 aa)).

This sequence belongs to the TFE family. As to quaternary structure, monomer. Interaction with RNA polymerase subunits RpoF and RpoE is necessary for Tfe stimulatory transcription activity. Able to interact with Tbp and RNA polymerase in the absence of DNA promoter. Interacts both with the preinitiation and elongation complexes.

Its function is as follows. Transcription factor that plays a role in the activation of archaeal genes transcribed by RNA polymerase. Facilitates transcription initiation by enhancing TATA-box recognition by TATA-box-binding protein (Tbp), and transcription factor B (Tfb) and RNA polymerase recruitment. Not absolutely required for transcription in vitro, but particularly important in cases where Tbp or Tfb function is not optimal. It dynamically alters the nucleic acid-binding properties of RNA polymerases by stabilizing the initiation complex and destabilizing elongation complexes. Seems to translocate with the RNA polymerase following initiation and acts by binding to the non template strand of the transcription bubble in elongation complexes. The protein is Transcription factor E of Nanoarchaeum equitans (strain Kin4-M).